We begin with the raw amino-acid sequence, 156 residues long: Transcriptional repressor NrdR (156 aa).

The segment at 3–34 is a zinc-finger region; that stretch reads CPKCNSTQSKVVDSRHADELNAIRRRRECENC. The ATP-cone domain maps to 49–139; it reads LIVVKKDGTR…VYKEFKDVDQ (91 aa).

Belongs to the NrdR family. The cofactor is Zn(2+).

Functionally, negatively regulates transcription of bacterial ribonucleotide reductase nrd genes and operons by binding to NrdR-boxes. In Staphylococcus aureus (strain NCTC 8325 / PS 47), this protein is Transcriptional repressor NrdR.